A 1222-amino-acid polypeptide reads, in one-letter code: ATP-dependent helicase/nuclease subunit A (1222 aa).

One can recognise a UvrD-like helicase ATP-binding domain in the interval 39-495; sequence QKRTAQQIEA…ILLKENFRSQ (457 aa). Position 60–67 (60–67) interacts with ATP; that stretch reads ASAGSGKT. The UvrD-like helicase C-terminal domain maps to 524–810; it reads QLIAGSHAQT…NLMTIHKSKG (287 aa).

The protein belongs to the helicase family. AddA subfamily. Heterodimer of AddA and AddB/RexB. Mg(2+) is required as a cofactor.

It carries out the reaction Couples ATP hydrolysis with the unwinding of duplex DNA by translocating in the 3'-5' direction.. The enzyme catalyses ATP + H2O = ADP + phosphate + H(+). The heterodimer acts as both an ATP-dependent DNA helicase and an ATP-dependent, dual-direction single-stranded exonuclease. Recognizes the chi site generating a DNA molecule suitable for the initiation of homologous recombination. The AddA nuclease domain is required for chi fragment generation; this subunit has the helicase and 3' -&gt; 5' nuclease activities. This chain is ATP-dependent helicase/nuclease subunit A, found in Streptococcus pyogenes serotype M4 (strain MGAS10750).